A 275-amino-acid chain; its full sequence is MSAPVTRKRLTPKVIQAMKGECPIVSLTAYTTPVARLLDPHCDLLLVGDSLGMVLYGMESTLAVTLDMMIMHGQAVMRGTSHACVIVDMPFGSYQESKEQAFRNAARVMQETGCDGVKLEGGEEMAETVAFLVRRGIPVFGHVGLMPQQVNTVGGFRSLGRGDDEAGKIRRDAQAIAQAGAFAVVIEGTVEPLAREITALIDIPTVGIGASSACDGQVLVSDDMLGLFQDFTPRFVKRFAHLAPQVSQAAEAYAEEVRARRFPGPEHVFGAKPGA.

Mg(2+)-binding residues include D49 and D88. 3-methyl-2-oxobutanoate contacts are provided by residues 49–50 (DS), D88, and K118. E120 is a Mg(2+) binding site. E187 acts as the Proton acceptor in catalysis.

The protein belongs to the PanB family. In terms of assembly, homodecamer; pentamer of dimers. Mg(2+) is required as a cofactor.

The protein localises to the cytoplasm. The enzyme catalyses 3-methyl-2-oxobutanoate + (6R)-5,10-methylene-5,6,7,8-tetrahydrofolate + H2O = 2-dehydropantoate + (6S)-5,6,7,8-tetrahydrofolate. It participates in cofactor biosynthesis; (R)-pantothenate biosynthesis; (R)-pantoate from 3-methyl-2-oxobutanoate: step 1/2. In terms of biological role, catalyzes the reversible reaction in which hydroxymethyl group from 5,10-methylenetetrahydrofolate is transferred onto alpha-ketoisovalerate to form ketopantoate. This is 3-methyl-2-oxobutanoate hydroxymethyltransferase from Brucella melitensis biotype 1 (strain ATCC 23456 / CCUG 17765 / NCTC 10094 / 16M).